The primary structure comprises 456 residues: Protein FAM124B (456 aa).

The disordered stretch occupies residues 262 to 313; that stretch reads NGCLRGDTHPQDSSLNSVSTQRTLEPRSRRRSRSRRFKVHSLELPQPSGSWE. Residues 272 to 284 are compositionally biased toward polar residues; the sequence is QDSSLNSVSTQRT. Positions 289–300 are enriched in basic residues; sequence SRRRSRSRRFKV.

The protein belongs to the FAM124 family. In terms of assembly, interacts with CHD7 and CHD8. Expressed strongly in lung, at slightly lower levels in heart, kidney, brain and testis, and weakly in liver (at protein level). In brain, highly expressed in cortex, hippocampus, dentate gyrus, caudate putamen and cerebellum (at protein level).

It localises to the nucleus. This Mus musculus (Mouse) protein is Protein FAM124B (Fam124b).